A 720-amino-acid polypeptide reads, in one-letter code: Putative fatty acid oxidation complex trifunctional enzyme (720 aa).

Residues 1–384 form a 3-hydroxyacyl-CoA dehydrogenase region; it reads MQNEIKKVCV…SWHYGPFELL (384 aa). The interval 453 to 720 is enoyl-CoA hydratase/isomerase; sequence FVITTKMNSL…TIEKLQAIVG (268 aa).

The protein in the N-terminal section; belongs to the 3-hydroxyacyl-CoA dehydrogenase family. It in the C-terminal section; belongs to the enoyl-CoA hydratase/isomerase family.

It catalyses the reaction a (3S)-3-hydroxyacyl-CoA + NAD(+) = a 3-oxoacyl-CoA + NADH + H(+). It carries out the reaction a (3S)-3-hydroxyacyl-CoA = a (2E)-enoyl-CoA + H2O. The enzyme catalyses a 4-saturated-(3S)-3-hydroxyacyl-CoA = a (3E)-enoyl-CoA + H2O. The catalysed reaction is a (3Z)-enoyl-CoA = a 4-saturated (2E)-enoyl-CoA. It catalyses the reaction a (3E)-enoyl-CoA = a 4-saturated (2E)-enoyl-CoA. The chain is Putative fatty acid oxidation complex trifunctional enzyme from Rickettsia prowazekii (strain Madrid E).